The following is a 391-amino-acid chain: ATP phosphoribosyltransferase regulatory subunit (391 aa).

This sequence belongs to the class-II aminoacyl-tRNA synthetase family. HisZ subfamily. Heteromultimer composed of HisG and HisZ subunits.

It localises to the cytoplasm. The protein operates within amino-acid biosynthesis; L-histidine biosynthesis; L-histidine from 5-phospho-alpha-D-ribose 1-diphosphate: step 1/9. In terms of biological role, required for the first step of histidine biosynthesis. May allow the feedback regulation of ATP phosphoribosyltransferase activity by histidine. The polypeptide is ATP phosphoribosyltransferase regulatory subunit (Bacillus pumilus (strain SAFR-032)).